The sequence spans 664 residues: Macoilin (664 aa).

4 helical membrane-spanning segments follow: residues threonine 28–leucine 48, alanine 75–isoleucine 95, valine 120–phenylalanine 140, and phenylalanine 154–valine 174. Basic and acidic residues predominate over residues tyrosine 252–lysine 265. Positions tyrosine 252–asparagine 274 are disordered. Position 305 is a phosphoserine (serine 305). Positions lysine 320–serine 348 are enriched in polar residues. The segment at lysine 320–asparagine 375 is disordered. A glycan (N-linked (GlcNAc...) asparagine) is linked at asparagine 324. Serine 332 is subject to Phosphoserine. Residues asparagine 340 and asparagine 452 are each glycosylated (N-linked (GlcNAc...) asparagine). The tract at residues threonine 630 to lysine 664 is disordered. 2 positions are modified to phosphoserine: serine 631 and serine 634. Asparagine 655 carries an N-linked (GlcNAc...) asparagine glycan.

This sequence belongs to the macoilin family.

Its subcellular location is the rough endoplasmic reticulum membrane. It is found in the nucleus membrane. Its function is as follows. Plays a role in the regulation of neuronal activity. The chain is Macoilin from Rattus norvegicus (Rat).